An 811-amino-acid polypeptide reads, in one-letter code: Elongation factor G, mitochondrial (811 aa).

The N-terminal 64 residues, 1-64 (MSAIARAAAR…FQQSFQRRWA (64 aa)), are a transit peptide targeting the mitochondrion. The tr-type G domain occupies 96-394 (RRQRNVGISA…GVCAYLPNPS (299 aa)). GTP is bound by residues 105–112 (AHIDSGKT), 192–196 (DTPGH), and 246–249 (NKMD).

This sequence belongs to the TRAFAC class translation factor GTPase superfamily. Classic translation factor GTPase family. EF-G/EF-2 subfamily.

The protein resides in the mitochondrion. Its pathway is protein biosynthesis; polypeptide chain elongation. Functionally, mitochondrial GTPase that catalyzes the GTP-dependent ribosomal translocation step during translation elongation. During this step, the ribosome changes from the pre-translocational (PRE) to the post-translocational (POST) state as the newly formed A-site-bound peptidyl-tRNA and P-site-bound deacylated tRNA move to the P and E sites, respectively. Catalyzes the coordinated movement of the two tRNA molecules, the mRNA and conformational changes in the ribosome. This chain is Elongation factor G, mitochondrial, found in Cryptococcus neoformans var. neoformans serotype D (strain JEC21 / ATCC MYA-565) (Filobasidiella neoformans).